We begin with the raw amino-acid sequence, 258 residues long: Apolipoprotein A-I (258 aa).

The signal sequence occupies residues 1-18 (MKFLVLALTILLAAGTQA). The 3 X approximate tandem repeats stretch occupies residues 32 to 63 (VKAALNMYIAQVKLTAQRSIDLLDDTEYKEYK). A run of 2 repeats spans residues 64 to 85 (MQLSQSLDNLQQFADSTSKSWP) and 86 to 106 (PTPRSSAPSCDATATVRAEVM). A 10 X approximate tandem repeats region spans residues 64 to 258 (MQLSQSLDNL…WLSTRPSARP (195 aa)). A 3; half-length repeat occupies 107–117 (KDVEDVRTQLE). 7 repeat units span residues 118 to 139 (PKRAELTEVLNKHIDEYRKKLE), 140 to 161 (PLIKQHIELRRTEMDAFRAKID), 162 to 183 (PVVEEMRAKVAVNVEETKTKLM), 184 to 205 (PIVEIVRAKLTERLEELRTLAA), 206 to 227 (PYAEEYKEQMFKAVGEVREKVA), 228 to 238 (PLSEDFKARWA), and 239 to 258 (PPPRRPSKSSWLSTRPSARP). A disordered region spans residues 233–258 (FKARWAPPPRRPSKSSWLSTRPSARP). The segment covering 246–258 (KSSWLSTRPSARP) has biased composition (polar residues).

It belongs to the apolipoprotein A1/A4/E family. Major protein of plasma HDL, also found in chylomicrons. Expressed in liver, intestine and muscle.

It is found in the secreted. In terms of biological role, participates in the reverse transport of cholesterol from tissues to the liver for excretion by promoting cholesterol efflux from tissues and by acting as a cofactor for the lecithin cholesterol acyltransferase (LCAT). In Salmo salar (Atlantic salmon), this protein is Apolipoprotein A-I (apoa1).